The sequence spans 668 residues: DNA mismatch repair protein MutL (668 aa).

It belongs to the DNA mismatch repair MutL/HexB family.

This protein is involved in the repair of mismatches in DNA. It is required for dam-dependent methyl-directed DNA mismatch repair. May act as a 'molecular matchmaker', a protein that promotes the formation of a stable complex between two or more DNA-binding proteins in an ATP-dependent manner without itself being part of a final effector complex. In Limosilactobacillus reuteri (strain DSM 20016) (Lactobacillus reuteri), this protein is DNA mismatch repair protein MutL.